The sequence spans 238 residues: tRNA (guanine-N(7)-)-methyltransferase (238 aa).

Residues E68, E93, D120, and D143 each contribute to the S-adenosyl-L-methionine site. Residue D143 is part of the active site. Substrate contacts are provided by residues K147, D179, and 216–219 (TKFE).

The protein belongs to the class I-like SAM-binding methyltransferase superfamily. TrmB family.

It carries out the reaction guanosine(46) in tRNA + S-adenosyl-L-methionine = N(7)-methylguanosine(46) in tRNA + S-adenosyl-L-homocysteine. Its pathway is tRNA modification; N(7)-methylguanine-tRNA biosynthesis. Its function is as follows. Catalyzes the formation of N(7)-methylguanine at position 46 (m7G46) in tRNA. The sequence is that of tRNA (guanine-N(7)-)-methyltransferase from Shewanella baltica (strain OS155 / ATCC BAA-1091).